Here is a 26-residue protein sequence, read N- to C-terminus: LTCLTKMVECIQLPLDVEDSSDTLCC.

Contains 2 disulfide bonds. Expressed by the venom duct.

The protein resides in the secreted. Acts as a neurotoxin by inhibiting an ion channel. The chain is Turripeptide OL57 from Iotyrris olangoensis (Sea snail).